Consider the following 257-residue polypeptide: Zinc transporter ZupT (257 aa).

5 helical membrane-spanning segments follow: residues 5–25, 32–52, 61–81, 109–129, and 137–157; these read LILT…AVLG, VLAF…LMEM, GMSP…YFGL, AILL…ATFV, and LGMG…LAVA. Residues Asn120 and Glu123 each contribute to the Fe(2+) site. Zn(2+) is bound by residues Glu123 and His148. Residues Asn149, Glu152, and Glu181 each contribute to the Fe(2+) site. Glu152 provides a ligand contact to Zn(2+). Helical transmembrane passes span 182–202, 203–223, and 236–256; these read ILGG…VVMA, AVMA…LMPL, and GVLC…TAGI.

The protein belongs to the ZIP transporter (TC 2.A.5) family. ZupT subfamily.

It is found in the cell inner membrane. It carries out the reaction Zn(2+)(in) = Zn(2+)(out). In terms of biological role, mediates zinc uptake. May also transport other divalent cations. The chain is Zinc transporter ZupT from Escherichia fergusonii (strain ATCC 35469 / DSM 13698 / CCUG 18766 / IAM 14443 / JCM 21226 / LMG 7866 / NBRC 102419 / NCTC 12128 / CDC 0568-73).